Reading from the N-terminus, the 450-residue chain is Chromosomal replication initiator protein DnaA (450 aa).

Residues 1–71 (MEDVWLQAQS…SVRSLTDSHF (71 aa)) are domain I, interacts with DnaA modulators. The segment at 71 to 113 (FQVELQVAARQQEKTAKSPRKSHTEDELGPVESEKCAPAEFST) is domain II. Residues 82–103 (QEKTAKSPRKSHTEDELGPVES) form a disordered region. The tract at residues 114 to 330 (NLNAKYTFDT…GMLIRLGAVA (217 aa)) is domain III, AAA+ region. G158, G160, K161, and T162 together coordinate ATP. The tract at residues 331–450 (SLTGKNITLD…IETLRKGLLN (120 aa)) is domain IV, binds dsDNA.

It belongs to the DnaA family. In terms of assembly, oligomerizes as a right-handed, spiral filament on DNA at oriC.

It localises to the cytoplasm. Plays an essential role in the initiation and regulation of chromosomal replication. ATP-DnaA binds to the origin of replication (oriC) to initiate formation of the DNA replication initiation complex once per cell cycle. Binds the DnaA box (a 9 base pair repeat at the origin) and separates the double-stranded (ds)DNA. Forms a right-handed helical filament on oriC DNA; dsDNA binds to the exterior of the filament while single-stranded (ss)DNA is stabiized in the filament's interior. The ATP-DnaA-oriC complex binds and stabilizes one strand of the AT-rich DNA unwinding element (DUE), permitting loading of DNA polymerase. After initiation quickly degrades to an ADP-DnaA complex that is not apt for DNA replication. Binds acidic phospholipids. The chain is Chromosomal replication initiator protein DnaA from Geobacter metallireducens (strain ATCC 53774 / DSM 7210 / GS-15).